Consider the following 298-residue polypeptide: Keratin-associated protein 10-11 (298 aa).

25 tandem repeats follow at residues 26–30 (CCEPP), 36–40 (CCAPA), 57–61 (CCQAA), 79–83 (CCQQS), 89–93 (CCTSS), 99–103 (CCVPV), 104–108 (CCKTV), 109–113 (CCKPV), 114–118 (CCVPV), 119–123 (CCGAA), 126–130 (CCRQS), 136–140 (CCASS), 146–150 (CCVPV), 151–155 (CCKPV), 156–160 (CCVST), 168–172 (CCQQS), 178–182 (CCTSS), 188–192 (CCVPV), 193–197 (CCKTV), 203–207 (CCVPV), 225–229 (CCTTS), 230–234 (CCRPS), 249–253 (CCVPV), 256–260 (CCAPT), and 267–271 (CCRPA). The interval 26–271 (CCEPPCSAPS…SCQSSCCRPA (246 aa)) is 25 X 5 AA repeats of C-C-X(3).

It belongs to the KRTAP type 10 family. Interacts with hair keratins. In terms of tissue distribution, restricted to a narrow region of the hair fiber cuticle, lying approximately 20 cell layers above the apex of the dermal papilla of the hair root; not detected in any other tissues.

In the hair cortex, hair keratin intermediate filaments are embedded in an interfilamentous matrix, consisting of hair keratin-associated proteins (KRTAP), which are essential for the formation of a rigid and resistant hair shaft through their extensive disulfide bond cross-linking with abundant cysteine residues of hair keratins. The matrix proteins include the high-sulfur and high-glycine-tyrosine keratins. This is Keratin-associated protein 10-11 (KRTAP10-11) from Homo sapiens (Human).